The following is a 388-amino-acid chain: Succinate--CoA ligase [ADP-forming] subunit beta (388 aa).

Residues 9–244 (KQIFAKYKLP…PSQDDPREAL (236 aa)) enclose the ATP-grasp domain. Residues Lys-46, 53–55 (GRG), Glu-99, Ala-102, and Glu-107 contribute to the ATP site. Asn-199 and Asp-213 together coordinate Mg(2+). Substrate is bound by residues Asn-264 and 321–323 (GIV).

Belongs to the succinate/malate CoA ligase beta subunit family. In terms of assembly, heterotetramer of two alpha and two beta subunits. The cofactor is Mg(2+).

The enzyme catalyses succinate + ATP + CoA = succinyl-CoA + ADP + phosphate. It catalyses the reaction GTP + succinate + CoA = succinyl-CoA + GDP + phosphate. Its pathway is carbohydrate metabolism; tricarboxylic acid cycle; succinate from succinyl-CoA (ligase route): step 1/1. Functionally, succinyl-CoA synthetase functions in the citric acid cycle (TCA), coupling the hydrolysis of succinyl-CoA to the synthesis of either ATP or GTP and thus represents the only step of substrate-level phosphorylation in the TCA. The beta subunit provides nucleotide specificity of the enzyme and binds the substrate succinate, while the binding sites for coenzyme A and phosphate are found in the alpha subunit. In Glaesserella parasuis serovar 5 (strain SH0165) (Haemophilus parasuis), this protein is Succinate--CoA ligase [ADP-forming] subunit beta.